The following is a 464-amino-acid chain: tRNA modification GTPase MnmE (464 aa).

3 residues coordinate (6S)-5-formyl-5,6,7,8-tetrahydrofolate: arginine 28, glutamate 90, and arginine 129. Residues 226–385 (GLATAIVGRP…LEEKIAELFF (160 aa)) form the TrmE-type G domain. Asparagine 236 is a binding site for K(+). GTP-binding positions include 236–241 (NVGKSS), 255–261 (TDIAGTT), and 280–283 (DTAG). A Mg(2+)-binding site is contributed by serine 240. Positions 255, 257, and 260 each coordinate K(+). Threonine 261 contacts Mg(2+). Position 464 (lysine 464) interacts with (6S)-5-formyl-5,6,7,8-tetrahydrofolate.

It belongs to the TRAFAC class TrmE-Era-EngA-EngB-Septin-like GTPase superfamily. TrmE GTPase family. In terms of assembly, homodimer. Heterotetramer of two MnmE and two MnmG subunits. The cofactor is K(+).

The protein resides in the cytoplasm. Functionally, exhibits a very high intrinsic GTPase hydrolysis rate. Involved in the addition of a carboxymethylaminomethyl (cmnm) group at the wobble position (U34) of certain tRNAs, forming tRNA-cmnm(5)s(2)U34. The sequence is that of tRNA modification GTPase MnmE from Ligilactobacillus salivarius (strain UCC118) (Lactobacillus salivarius).